The sequence spans 243 residues: tRNA (guanine-N(1)-)-methyltransferase (243 aa).

Residues Gly-108 and 127–132 each bind S-adenosyl-L-methionine; that span reads LGDFVL.

This sequence belongs to the RNA methyltransferase TrmD family. As to quaternary structure, homodimer.

The protein resides in the cytoplasm. The enzyme catalyses guanosine(37) in tRNA + S-adenosyl-L-methionine = N(1)-methylguanosine(37) in tRNA + S-adenosyl-L-homocysteine + H(+). Its function is as follows. Specifically methylates guanosine-37 in various tRNAs. The sequence is that of tRNA (guanine-N(1)-)-methyltransferase from Streptococcus equi subsp. zooepidemicus (strain MGCS10565).